The sequence spans 324 residues: Beta-ketoacyl-[acyl-carrier-protein] synthase III (324 aa).

Residues Cys116 and His251 contribute to the active site. An ACP-binding region spans residues 252 to 256 (QANLR). The active site involves Asn281.

It belongs to the thiolase-like superfamily. FabH family. In terms of assembly, homodimer.

The protein resides in the cytoplasm. The enzyme catalyses malonyl-[ACP] + acetyl-CoA + H(+) = 3-oxobutanoyl-[ACP] + CO2 + CoA. Its pathway is lipid metabolism; fatty acid biosynthesis. In terms of biological role, catalyzes the condensation reaction of fatty acid synthesis by the addition to an acyl acceptor of two carbons from malonyl-ACP. Catalyzes the first condensation reaction which initiates fatty acid synthesis and may therefore play a role in governing the total rate of fatty acid production. Possesses both acetoacetyl-ACP synthase and acetyl transacylase activities. Its substrate specificity determines the biosynthesis of branched-chain and/or straight-chain of fatty acids. The polypeptide is Beta-ketoacyl-[acyl-carrier-protein] synthase III (Xylella fastidiosa (strain 9a5c)).